The chain runs to 318 residues: Transaldolase (318 aa).

The active-site Schiff-base intermediate with substrate is the K132.

It belongs to the transaldolase family. Type 1 subfamily. In terms of assembly, homodimer.

The protein localises to the cytoplasm. The enzyme catalyses D-sedoheptulose 7-phosphate + D-glyceraldehyde 3-phosphate = D-erythrose 4-phosphate + beta-D-fructose 6-phosphate. The protein operates within carbohydrate degradation; pentose phosphate pathway; D-glyceraldehyde 3-phosphate and beta-D-fructose 6-phosphate from D-ribose 5-phosphate and D-xylulose 5-phosphate (non-oxidative stage): step 2/3. Functionally, transaldolase is important for the balance of metabolites in the pentose-phosphate pathway. The sequence is that of Transaldolase from Shewanella baltica (strain OS155 / ATCC BAA-1091).